Reading from the N-terminus, the 473-residue chain is Serine incorporator 3 (473 aa).

Over methionine 1–lysine 96 the chain is Extracellular. N-linked (GlcNAc...) asparagine glycosylation occurs at asparagine 34. A helical membrane pass occupies residues alanine 97–phenylalanine 117. The Cytoplasmic segment spans residues lysine 118–glycine 132. A helical transmembrane segment spans residues phenylalanine 133 to glycine 153. The Extracellular portion of the chain corresponds to glycine 154–valine 159. Residues tryptophan 160–valine 180 form a helical membrane-spanning segment. Residues aspartate 181 to tyrosine 203 lie on the Cytoplasmic side of the membrane. Residues alanine 204–leucine 224 form a helical membrane-spanning segment. The Extracellular portion of the chain corresponds to tyrosine 225 to phenylalanine 239. The helical transmembrane segment at phenylalanine 240–isoleucine 260 threads the bilayer. Over glutamine 261–serine 329 the chain is Cytoplasmic. A helical membrane pass occupies residues glycine 330–tyrosine 350. Topologically, residues serine 351–serine 406 are extracellular. At serine 371 the chain carries Phosphoserine. Residues leucine 407–tyrosine 427 traverse the membrane as a helical segment. Residues serine 428–lysine 446 lie on the Cytoplasmic side of the membrane. A helical membrane pass occupies residues isoleucine 447–leucine 467. The Extracellular portion of the chain corresponds to threonine 468 to serine 473.

The protein belongs to the TDE1 family. In terms of processing, N-glycosylated. As to expression, ubiquitous. Expression levels were increased fourfold to tenfold in lung tumor tissues compared with normal pulmonary tissues.

It localises to the cell membrane. The protein resides in the golgi apparatus membrane. The protein localises to the cytoplasm. It is found in the perinuclear region. It carries out the reaction a 1,2-diacyl-sn-glycero-3-phospho-L-serine(in) = a 1,2-diacyl-sn-glycero-3-phospho-L-serine(out). The enzyme catalyses a 1,2-diacyl-sn-glycero-3-phosphocholine(in) = a 1,2-diacyl-sn-glycero-3-phosphocholine(out). The catalysed reaction is a 1,2-diacyl-sn-glycero-3-phosphoethanolamine(in) = a 1,2-diacyl-sn-glycero-3-phosphoethanolamine(out). Restriction factor required to restrict infectivity of lentiviruses, such as HIV-1: acts by inhibiting an early step of viral infection. Impairs the penetration of the viral particle into the cytoplasm. Non-ATP-dependent, non-specific lipid transporter for phosphatidylserine, phosphatidylcholine, and phosphatidylethanolamine. Functions as a scramblase that flips lipids in both directions across the membrane. Phospholipid scrambling results in HIV-1 surface exposure of phosphatidylserine and loss of membrane asymmetry, which leads to changes in HIV-1 Env conformation and loss of infectivity. This chain is Serine incorporator 3, found in Homo sapiens (Human).